Reading from the N-terminus, the 1227-residue chain is Protein transport protein Sec31A (1227 aa).

WD repeat units follow at residues lysine 4–glutamate 47, serine 64–threonine 111, lysine 120–threonine 160, glutamine 166–lysine 206, aspartate 209–arginine 254, serine 258–glutamate 298, and threonine 301–arginine 342. A WD 8; interaction with SEC13 repeat occupies serine 397–serine 430. Disordered regions lie at residues glutamate 804 to alanine 875, glutamine 905 to aspartate 1008, and alanine 1040 to tyrosine 1075. Over residues glutamine 905–proline 924 the composition is skewed to low complexity. Residues proline 925–serine 945 are compositionally biased toward pro residues. The segment covering proline 995–tryptophan 1006 has biased composition (polar residues). Residues alanine 1040 to proline 1049 are compositionally biased toward low complexity. Residues proline 1057–glutamine 1069 show a composition bias toward polar residues.

It belongs to the WD repeat SEC31 family. COPII is composed of at least 5 proteins: the SEC23/24 complex, the SEC13/31 complex and SAR1. SEC13 and SEC31 make a 2:2 tetramer that forms the edge element of the COPII outer coat. The tetramer self-assembles in multiple copies to form the complete polyhedral cage. Interacts (via WD 8) with SEC13.

It localises to the cytoplasm. It is found in the cytoplasmic vesicle. The protein resides in the COPII-coated vesicle membrane. The protein localises to the endoplasmic reticulum membrane. In terms of biological role, component of the coat protein complex II (COPII) which promotes the formation of transport vesicles from the endoplasmic reticulum (ER). The coat has two main functions, the physical deformation of the endoplasmic reticulum membrane into vesicles and the selection of cargo molecules. The protein is Protein transport protein Sec31A (SEC31A) of Gallus gallus (Chicken).